The primary structure comprises 665 residues: MAASNHSSGKPGGVLSDALCRELWHACAGPLVTLPREGERVYYFPEGHMEQLEASMHQGLEQQMPSFNLPSKILCKVINIQRRAEPETDEVYAQITLLPELDQSEPTSPDAPVQEPEKCTVHSFCKTLTASDTSTHGGFSVLRRHADDCLPPLDMSQQPPWQELVATDLHNSEWHFRHIFRGQPRRHLLTTGWSVFVSSKKLVAGDAFIFLRGENEELRVGVRRHMRQQTNIPSSVISSHSMHIGVLATAAHAITTGTIFSVFYKPRTSRSEFIVSVNRYLEAKTQKLSVGMRFKMRFEGEEAPEKRFSGTIVGVQENKSSVWHDSEWRSLKVQWDEPSSVFRPERVSPWELEPLVANSTPSSQPQPPQRNKRPRPPGLPSPATGPSGPVTPDGVWKSPADTPSSVPLFSPPAKAATFGHGGNKSFGVSIGSAFWPTNADSAAESFASAFNNESTEKKQTNGNVCRLFGFELVENVNVDECFSAASVSGAVAVDQPVPSNEFDSGQQSEPLNINQSDIPSGSGDPEKSSLRSPQESQSRQIRSCTKVHMQGSAVGRAIDLTRSECYEDLFKKLEEMFDIKGELLESTKKWQVVYTDDEDDMMMVGDDPWNEFCGMVRKIFIYTPEEVKKLSPKNKLAVNARMQLKADAEENGNTEGRSSSMAGSR.

A DNA-binding region (TF-B3) is located at residues 124–226 (FCKTLTASDT…ELRVGVRRHM (103 aa)). Disordered regions lie at residues 356–408 (VANS…SVPL), 496–542 (PVPS…RQIR), and 645–665 (KADA…AGSR). Polar residues-rich tracts occupy residues 497–519 (VPSN…SDIP), 530–542 (LRSP…RQIR), and 651–665 (NGNT…AGSR). Positions 542–635 (RSCTKVHMQG…EVKKLSPKNK (94 aa)) constitute a PB1 domain.

Belongs to the ARF family. As to quaternary structure, homodimers and heterodimers. Interacts with the auxin-responsive proteins IAA12, IAA13, IAA17 and with ARF2. Binds to RIN13 in the nucleus. In terms of tissue distribution, expressed in the whole plant.

The protein resides in the nucleus. The protein localises to the cytoplasm. In terms of biological role, auxin response factors (ARFs) are transcriptional factors that bind specifically to the DNA sequence 5'-TGTCTC-3' found in the auxin-responsive promoter elements (AuxREs). Seems to act as transcriptional repressor. Formation of heterodimers with Aux/IAA proteins may alter their ability to modulate early auxin response genes expression. Promotes flowering, stamen development, floral organ abscission and fruit dehiscence. Acts as a repressor of IAA2, IAA3 and IAA7. Together with RIN13, promotes leaf senescence and cell death. This is Auxin response factor 1 from Arabidopsis thaliana (Mouse-ear cress).